Reading from the N-terminus, the 327-residue chain is Mitochondrial coenzyme A transporter SLC25A42 (327 aa).

3 Solcar repeats span residues 34-120 (KSIL…YKKL), 132-217 (LTPI…LKKL), and 227-315 (PYPF…TQIL). The next 6 helical transmembrane spans lie at 36–56 (ILNSLMSGALAGAVAKTAVAP), 92–112 (LWRGNSATMVRVIPYAAIQFC), 138–158 (LLAGALAGTTATIITYPLDLV), 189–209 (LYRGFTPTVLGVIPYAGISFF), 233–253 (LLFGACAGLFGQSASYPLDVV), and 296–316 (VKGPVAVGISFTTFDLTQILL).

Belongs to the mitochondrial carrier (TC 2.A.29) family.

The protein localises to the mitochondrion inner membrane. It catalyses the reaction ADP(out) + CoA(in) = ADP(in) + CoA(out). The catalysed reaction is 3'-dephospho-CoA(in) + ADP(out) = 3'-dephospho-CoA(out) + ADP(in). It carries out the reaction adenosine 3',5'-bisphosphate(in) + ADP(out) = adenosine 3',5'-bisphosphate(out) + ADP(in). The enzyme catalyses AMP(in) + ADP(out) = AMP(out) + ADP(in). It catalyses the reaction dADP(in) + ADP(out) = dADP(out) + ADP(in). The catalysed reaction is ADP(in) + ATP(out) = ADP(out) + ATP(in). Functionally, mitochondrial carrier mediating the transport of coenzyme A (CoA) in mitochondria in exchange for intramitochondrial (deoxy)adenine nucleotides and adenosine 3',5'-diphosphate. In Xenopus tropicalis (Western clawed frog), this protein is Mitochondrial coenzyme A transporter SLC25A42 (slc25a42).